Here is a 423-residue protein sequence, read N- to C-terminus: Serine--tRNA ligase (423 aa).

231-233 (TGE) serves as a coordination point for L-serine. 262–264 (RSE) is an ATP binding site. E285 provides a ligand contact to L-serine. Residue 349–352 (EISS) coordinates ATP. S385 provides a ligand contact to L-serine.

The protein belongs to the class-II aminoacyl-tRNA synthetase family. Type-1 seryl-tRNA synthetase subfamily. As to quaternary structure, homodimer. The tRNA molecule binds across the dimer.

The protein localises to the cytoplasm. It carries out the reaction tRNA(Ser) + L-serine + ATP = L-seryl-tRNA(Ser) + AMP + diphosphate + H(+). It catalyses the reaction tRNA(Sec) + L-serine + ATP = L-seryl-tRNA(Sec) + AMP + diphosphate + H(+). Its pathway is aminoacyl-tRNA biosynthesis; selenocysteinyl-tRNA(Sec) biosynthesis; L-seryl-tRNA(Sec) from L-serine and tRNA(Sec): step 1/1. Catalyzes the attachment of serine to tRNA(Ser). Is also able to aminoacylate tRNA(Sec) with serine, to form the misacylated tRNA L-seryl-tRNA(Sec), which will be further converted into selenocysteinyl-tRNA(Sec). The protein is Serine--tRNA ligase of Coxiella burnetii (strain CbuK_Q154) (Coxiella burnetii (strain Q154)).